Here is a 365-residue protein sequence, read N- to C-terminus: UDP-N-acetylglucosamine--N-acetylmuramyl-(pentapeptide) pyrophosphoryl-undecaprenol N-acetylglucosamine transferase (365 aa).

UDP-N-acetyl-alpha-D-glucosamine contacts are provided by residues 17-19 (TGG), asparagine 129, arginine 167, serine 194, isoleucine 250, 269-274 (ALTVSE), and glutamine 295.

This sequence belongs to the glycosyltransferase 28 family. MurG subfamily.

It localises to the cell inner membrane. It catalyses the reaction di-trans,octa-cis-undecaprenyl diphospho-N-acetyl-alpha-D-muramoyl-L-alanyl-D-glutamyl-meso-2,6-diaminopimeloyl-D-alanyl-D-alanine + UDP-N-acetyl-alpha-D-glucosamine = di-trans,octa-cis-undecaprenyl diphospho-[N-acetyl-alpha-D-glucosaminyl-(1-&gt;4)]-N-acetyl-alpha-D-muramoyl-L-alanyl-D-glutamyl-meso-2,6-diaminopimeloyl-D-alanyl-D-alanine + UDP + H(+). It functions in the pathway cell wall biogenesis; peptidoglycan biosynthesis. In terms of biological role, cell wall formation. Catalyzes the transfer of a GlcNAc subunit on undecaprenyl-pyrophosphoryl-MurNAc-pentapeptide (lipid intermediate I) to form undecaprenyl-pyrophosphoryl-MurNAc-(pentapeptide)GlcNAc (lipid intermediate II). In Shewanella pealeana (strain ATCC 700345 / ANG-SQ1), this protein is UDP-N-acetylglucosamine--N-acetylmuramyl-(pentapeptide) pyrophosphoryl-undecaprenol N-acetylglucosamine transferase.